We begin with the raw amino-acid sequence, 505 residues long: Probable malate:quinone oxidoreductase (505 aa).

This sequence belongs to the MQO family. It depends on FAD as a cofactor.

It carries out the reaction (S)-malate + a quinone = a quinol + oxaloacetate. The protein operates within carbohydrate metabolism; tricarboxylic acid cycle; oxaloacetate from (S)-malate (quinone route): step 1/1. The protein is Probable malate:quinone oxidoreductase of Pseudomonas fluorescens.